Reading from the N-terminus, the 535-residue chain is SIR4-interacting protein SIF2 (535 aa).

In terms of domain architecture, LisH spans 4-36; that stretch reads TSEELNYLIWRYCQEMGHEVSALALQDETRVLE. The interval 104–140 is disordered; that stretch reads EGRFTLETNSESNKAGEDGASTVERETQEDDTNSIDS. Positions 130–140 are enriched in acidic residues; that stretch reads TQEDDTNSIDS. Residue S137 is modified to Phosphoserine. WD repeat units lie at residues 155-186, 218-248, 259-289, 316-345, 357-387, 399-428, 440-470, and 503-534; these read VKLDNIVSSTWNPLDESILAYGEKNSVARLAR, KTTNQVTCLAWSHDGNSIVTGVENGELRLWN, FHRAPIVSVKWNKDGTHIISMDVENVTILWN, GDGSLGVDVEWVDDDKFVIPGPKGAIFVYQ, GHHGPISVLEFNDTNKLLLSASDDGTLRIWH, GHSQSIVSASWVGDDKVISCSMDGSVRLWS, VDGVPIFAGRISQDGQKYAVAFMDGQVNVYD, and SQDNDYIFDLSWNCAGNKISVAYSLQEGSVVA.

As to quaternary structure, homotetramer. Interacts with SIR4 N-terminal domain. Interacts with a complex composed of SIN3 and RPD3. Identified in the Set3C complex with HOS2, HST1, SNT1, CPR1, HOS4/YIL112W and SET3.

The protein localises to the nucleus. Its function is as follows. Antagonizes telomeric silencing in yeast. May recruit SIR4 to non-telomeric sites or repression. This Saccharomyces cerevisiae (strain ATCC 204508 / S288c) (Baker's yeast) protein is SIR4-interacting protein SIF2 (SIF2).